A 705-amino-acid polypeptide reads, in one-letter code: Structure-specific endonuclease subunit SLX1 homolog (705 aa).

Positions 4 to 90 (RFHCVYLLTS…TASARLRHAI (87 aa)) constitute a GIY-YIG domain. Disordered regions lie at residues 155–192 (RASS…DSKG) and 290–323 (ASFA…RVHT). Composition is skewed to polar residues over residues 160-175 (RVGT…SLQG) and 310-320 (STGSRTPSPQR). The SLX1-type zinc finger occupies 446 to 526 (CSLCTLPLQP…PSQPCPCPLC (81 aa)). Residues 595–604 (KGAGEAPGAA) show a composition bias toward low complexity. A disordered region spans residues 595-628 (KGAGEAPGAASTVRASTMHVGPARRDAPRVSSPS).

This sequence belongs to the SLX1 family. In terms of assembly, forms a heterodimer with a member of the SLX4 family. The cofactor is a divalent metal cation.

The protein localises to the nucleus. In terms of biological role, catalytic subunit of a heterodimeric structure-specific endonuclease that resolves DNA secondary structures generated during DNA repair and recombination. Has endonuclease activity towards branched DNA substrates, introducing single-strand cuts in duplex DNA close to junctions with ss-DNA. In Leishmania infantum, this protein is Structure-specific endonuclease subunit SLX1 homolog.